A 473-amino-acid chain; its full sequence is Sarcalumenin (473 aa).

Positions 1–20 (MRALVLLGCLLASLLFSGQA) are cleaved as a signal peptide. The Dynamin-type G domain occupies 90–331 (ITSKPMVLFL…IENRLENKIA (242 aa)). The segment at 100–107 (GPWSVGKS) is G1 motif. Positions 128 to 129 (EP) are G2 motif. Positions 190–193 (DTPG) are G3 motif. Positions 255–258 (NKAD) are G4 motif. Pro278 is a region of interest (G5 motif). N-linked (GlcNAc...) asparagine glycosylation is found at Asn281 and Asn389.

Belongs to the TRAFAC class dynamin-like GTPase superfamily. Dynamin/Fzo/YdjA family. Post-translationally, N-glycosylated.

The protein localises to the sarcoplasmic reticulum lumen. It is found in the sarcoplasmic reticulum membrane. The chain is Sarcalumenin (SRL) from Homo sapiens (Human).